The following is a 380-amino-acid chain: Erythronate-4-phosphate dehydrogenase (380 aa).

Residues serine 45 and threonine 66 each coordinate substrate. NAD(+) is bound by residues aspartate 146, threonine 174, 205 to 207 (ASR), and aspartate 231. Arginine 207 is an active-site residue. The active site involves glutamate 236. Residue histidine 253 is the Proton donor of the active site. NAD(+) is bound at residue glycine 256. Residue tyrosine 257 participates in substrate binding.

This sequence belongs to the D-isomer specific 2-hydroxyacid dehydrogenase family. PdxB subfamily. As to quaternary structure, homodimer.

Its subcellular location is the cytoplasm. The catalysed reaction is 4-phospho-D-erythronate + NAD(+) = (R)-3-hydroxy-2-oxo-4-phosphooxybutanoate + NADH + H(+). It functions in the pathway cofactor biosynthesis; pyridoxine 5'-phosphate biosynthesis; pyridoxine 5'-phosphate from D-erythrose 4-phosphate: step 2/5. Its function is as follows. Catalyzes the oxidation of erythronate-4-phosphate to 3-hydroxy-2-oxo-4-phosphonooxybutanoate. This chain is Erythronate-4-phosphate dehydrogenase, found in Pseudomonas fluorescens (strain SBW25).